Consider the following 342-residue polypeptide: Dihydroorotase (342 aa).

Residues His13 and His15 each contribute to the Zn(2+) site. Substrate is bound by residues 15–17 (HLR) and Asn41. Zn(2+)-binding residues include Lys98, His135, and His173. N6-carboxylysine is present on Lys98. Residue His135 participates in substrate binding. A substrate-binding site is contributed by Leu218. A Zn(2+)-binding site is contributed by Asp246. Asp246 is an active-site residue. Residues His250 and Ala262 each contribute to the substrate site.

This sequence belongs to the metallo-dependent hydrolases superfamily. DHOase family. Class II DHOase subfamily. Homodimer. Requires Zn(2+) as cofactor.

The enzyme catalyses (S)-dihydroorotate + H2O = N-carbamoyl-L-aspartate + H(+). It participates in pyrimidine metabolism; UMP biosynthesis via de novo pathway; (S)-dihydroorotate from bicarbonate: step 3/3. Its function is as follows. Catalyzes the reversible cyclization of carbamoyl aspartate to dihydroorotate. This Vibrio atlanticus (strain LGP32) (Vibrio splendidus (strain Mel32)) protein is Dihydroorotase.